Here is a 236-residue protein sequence, read N- to C-terminus: Small ribosomal subunit protein uS3 (236 aa).

A KH type-2 domain is found at Ile-39 to Lys-107. The span at Gln-213–Gly-229 shows a compositional bias: basic and acidic residues. The segment at Gln-213–Gln-236 is disordered.

Belongs to the universal ribosomal protein uS3 family. Part of the 30S ribosomal subunit. Forms a tight complex with proteins S10 and S14.

Binds the lower part of the 30S subunit head. Binds mRNA in the 70S ribosome, positioning it for translation. In Wolinella succinogenes (strain ATCC 29543 / DSM 1740 / CCUG 13145 / JCM 31913 / LMG 7466 / NCTC 11488 / FDC 602W) (Vibrio succinogenes), this protein is Small ribosomal subunit protein uS3.